We begin with the raw amino-acid sequence, 194 residues long: Putative manganese efflux pump MntP (194 aa).

Helical transmembrane passes span 8–28 (LLAI…GIIL), 36–56 (MLIM…LGWL), 61–81 (FSHL…AFLG), 109–129 (MAVA…FLGI), 138–158 (PAGI…IFGI), and 172–192 (LWGG…HLFF).

It belongs to the MntP (TC 9.B.29) family.

Its subcellular location is the cell inner membrane. Probably functions as a manganese efflux pump. In Bacteroides fragilis (strain ATCC 25285 / DSM 2151 / CCUG 4856 / JCM 11019 / LMG 10263 / NCTC 9343 / Onslow / VPI 2553 / EN-2), this protein is Putative manganese efflux pump MntP.